A 191-amino-acid polypeptide reads, in one-letter code: Ribonuclease M5 (191 aa).

The region spanning 8 to 91 is the Toprim domain; it reads HEFIVVEGRD…AFINRQDALP (84 aa). Mg(2+)-binding residues include Glu14, Asp60, and Asp62.

Belongs to the ribonuclease M5 family. Mg(2+) serves as cofactor.

It localises to the cytoplasm. It catalyses the reaction Endonucleolytic cleavage of RNA, removing 21 and 42 nucleotides, respectively, from the 5'- and 3'-termini of a 5S-rRNA precursor.. Required for correct processing of both the 5' and 3' ends of 5S rRNA precursor. Cleaves both sides of a double-stranded region yielding mature 5S rRNA in one step. The polypeptide is Ribonuclease M5 (Listeria monocytogenes serovar 1/2a (strain ATCC BAA-679 / EGD-e)).